The following is a 102-amino-acid chain: Small ribosomal subunit protein uS10 (102 aa).

The protein belongs to the universal ribosomal protein uS10 family. As to quaternary structure, part of the 30S ribosomal subunit.

Its function is as follows. Involved in the binding of tRNA to the ribosomes. This Mesoplasma florum (strain ATCC 33453 / NBRC 100688 / NCTC 11704 / L1) (Acholeplasma florum) protein is Small ribosomal subunit protein uS10.